Reading from the N-terminus, the 657-residue chain is Wall-associated receptor kinase-like 20 (657 aa).

An N-terminal signal peptide occupies residues 1–23 (MEKKRSYYALLIPTLLTVWLACA). Over 24 to 293 (GHSCARHAKA…KHCKKKKKTV (270 aa)) the chain is Extracellular. An N-linked (GlcNAc...) asparagine glycan is attached at Asn140. A helical membrane pass occupies residues 294 to 314 (VFAGAAVAVVGVTLAIAVAVI). At 315-657 (GTKHSHQKVK…NILSQEVTET (343 aa)) the chain is on the cytoplasmic side. One can recognise a Protein kinase domain in the interval 363–646 (FSKDNLIGTG…KEVADEIEYI (284 aa)). ATP-binding positions include 369 to 377 (IGTGGFGEV) and Lys391. Residue Asp490 is the Proton acceptor of the active site.

This sequence belongs to the protein kinase superfamily. Ser/Thr protein kinase family.

It is found in the membrane. It catalyses the reaction L-seryl-[protein] + ATP = O-phospho-L-seryl-[protein] + ADP + H(+). The enzyme catalyses L-threonyl-[protein] + ATP = O-phospho-L-threonyl-[protein] + ADP + H(+). Serine/threonine-protein kinase that may function as a signaling receptor of extracellular matrix component. The protein is Wall-associated receptor kinase-like 20 (WAKL20) of Arabidopsis thaliana (Mouse-ear cress).